Here is a 290-residue protein sequence, read N- to C-terminus: MSKMAQKWDAYYRLMRLDRPIGTMLLLWPCLMALLLAADGMPDLRVLIIFIIGVVVMRACGCIINDYADRKLDSHVARTRSRPLASGEVTVAEALTLFVVLGLFAFSLVLLLNPLVVQLSVVGIILTIIYPFTKRWTNMPQMFLGVVWSWSIPMAYAAQTGEVPASAWWLFAANWCWTVAYDTMYAMVDRDDDLKVGIKSTAILFGRFDREIIGAFQLAALGCFIAAGWSGDRGLLYGLGVLTFVGFSAYQQRLIYGRERGDCFKAFLNNNWAGLSLFLALGADYAFAAL.

8 helical membrane passes run 21 to 41 (IGTM…ADGM), 44 to 64 (LRVL…GCII), 97 to 117 (LFVV…PLVV), 143 to 163 (FLGV…TGEV), 168 to 188 (WWLF…YAMV), 211 to 231 (EIIG…GWSG), 235 to 255 (LLYG…QRLI), and 270 to 290 (NNWA…FAAL).

The protein belongs to the UbiA prenyltransferase family. Mg(2+) serves as cofactor.

It is found in the cell inner membrane. It catalyses the reaction all-trans-octaprenyl diphosphate + 4-hydroxybenzoate = 4-hydroxy-3-(all-trans-octaprenyl)benzoate + diphosphate. Its pathway is cofactor biosynthesis; ubiquinone biosynthesis. Its function is as follows. Catalyzes the prenylation of para-hydroxybenzoate (PHB) with an all-trans polyprenyl group. Mediates the second step in the final reaction sequence of ubiquinone-8 (UQ-8) biosynthesis, which is the condensation of the polyisoprenoid side chain with PHB, generating the first membrane-bound Q intermediate 3-octaprenyl-4-hydroxybenzoate. In Shewanella amazonensis (strain ATCC BAA-1098 / SB2B), this protein is 4-hydroxybenzoate octaprenyltransferase.